Reading from the N-terminus, the 65-residue chain is Toxin CsEM1 (65 aa).

In terms of domain architecture, LCN-type CS-alpha/beta spans 1-65 (KEGYLVNSYT…VWPLPNKTCN (65 aa)). 4 disulfides stabilise this stretch: Cys12–Cys64, Cys16–Cys40, Cys25–Cys45, and Cys29–Cys47.

It belongs to the long (4 C-C) scorpion toxin superfamily. Sodium channel inhibitor family. Beta subfamily. In terms of tissue distribution, expressed by the venom gland.

The protein localises to the secreted. Its function is as follows. Beta toxins bind voltage-independently at site-4 of sodium channels (Nav) and shift the voltage of activation toward more negative potentials thereby affecting sodium channel activation and promoting spontaneous and repetitive firing. Highly potent. The protein is Toxin CsEM1 of Centruroides sculpturatus (Arizona bark scorpion).